A 166-amino-acid chain; its full sequence is UPF0303 protein Avin_29320 (166 aa).

This sequence belongs to the UPF0303 family.

In Azotobacter vinelandii (strain DJ / ATCC BAA-1303), this protein is UPF0303 protein Avin_29320.